We begin with the raw amino-acid sequence, 167 residues long: Lipoprotein signal peptidase (167 aa).

Helical transmembrane passes span leucine 10–valine 30, tryptophan 68–leucine 88, and serine 98–methionine 118. Catalysis depends on residues aspartate 124 and aspartate 142. Residues phenylalanine 138 to phenylalanine 158 form a helical membrane-spanning segment.

It belongs to the peptidase A8 family.

It is found in the cell inner membrane. It carries out the reaction Release of signal peptides from bacterial membrane prolipoproteins. Hydrolyzes -Xaa-Yaa-Zaa-|-(S,diacylglyceryl)Cys-, in which Xaa is hydrophobic (preferably Leu), and Yaa (Ala or Ser) and Zaa (Gly or Ala) have small, neutral side chains.. It participates in protein modification; lipoprotein biosynthesis (signal peptide cleavage). Its function is as follows. This protein specifically catalyzes the removal of signal peptides from prolipoproteins. The polypeptide is Lipoprotein signal peptidase (Xanthomonas campestris pv. campestris (strain 8004)).